The following is a 967-amino-acid chain: Aminopeptidase N (967 aa).

The Cytoplasmic portion of the chain corresponds to 1 to 8 (MAKGFYIS). Residues 9 to 32 (KPVGILAILLGVAAVCTIIALSVV) traverse the membrane as a helical; Signal-anchor for type II membrane protein segment. Residues 33-66 (YSQEKNRSTESSTAASTAAPTGPTTTVATTLDQS) form a cytosolic Ser/Thr-rich junction region. Over 33–967 (YSQEKNRSTE…VVLRWFTENS (935 aa)) the chain is Extracellular. Asn-38 is a glycosylation site (N-linked (GlcNAc...) asparagine). The interval 41 to 61 (TESSTAASTAAPTGPTTTVAT) is disordered. A metalloprotease region spans residues 67-967 (KPWNVYRLPK…VVLRWFTENS (901 aa)). Residues Asn-84 and Asn-126 are each glycosylated (N-linked (GlcNAc...) asparagine). A Sulfotyrosine modification is found at Tyr-175. Asn-233 and Asn-338 each carry an N-linked (GlcNAc...) asparagine glycan. A substrate-binding site is contributed by 351–355 (GAMEN). His-387 is a Zn(2+) binding site. Residue Glu-388 is the Proton acceptor of the active site. Zn(2+)-binding residues include His-391 and Glu-410. The residue at position 418 (Tyr-418) is a Sulfotyrosine. N-linked (GlcNAc...) asparagine glycans are attached at residues Asn-626, Asn-682, and Asn-740. The segment at 670 to 840 (ASAQKVPVTL…GALACSNQVW (171 aa)) is interaction with FCoV and TGEV spike glycoprotein. 2 cysteine pairs are disulfide-bonded: Cys-762–Cys-769 and Cys-799–Cys-835.

It belongs to the peptidase M1 family. As to quaternary structure, homodimer. Interacts with SLC6A19. (Microbial infection) Interacts with FCoV, CCoV, TGEV and HCoV-229E spike glycoprotein. Requires Zn(2+) as cofactor. Sulfated. In terms of processing, N- and O-glycosylated. Post-translationally, may undergo proteolysis and give rise to a soluble form.

It is found in the cell membrane. The catalysed reaction is Release of an N-terminal amino acid, Xaa-|-Yaa- from a peptide, amide or arylamide. Xaa is preferably Ala, but may be most amino acids including Pro (slow action). When a terminal hydrophobic residue is followed by a prolyl residue, the two may be released as an intact Xaa-Pro dipeptide.. Its function is as follows. Broad specificity aminopeptidase which plays a role in the final digestion of peptides generated from hydrolysis of proteins by gastric and pancreatic proteases. Also involved in the processing of various peptides including peptide hormones, such as angiotensin III and IV, neuropeptides, and chemokines. May also be involved the cleavage of peptides bound to major histocompatibility complex class II molecules of antigen presenting cells. May have a role in angiogenesis and promote cholesterol crystallization. May have a role in amino acid transport by acting as binding partner of amino acid transporter SLC6A19 and regulating its activity. Functionally, (Microbial infection) In case of feline coronavirus (FCoV) infection, serves as a receptor for FCoV spike glycoprotein. It is as well a receptor for other serogroup I coronaviruses, like canine coronavirus (CCoV), porcine transmissible gastroenteritis virus (TGEV), and human coronavirus 229E (HCoV-229E). Also serves as a receptor for infectious bronchitis virus (IBV, Arkansas 99 serotype) in serogroup III. This Felis catus (Cat) protein is Aminopeptidase N (ANPEP).